The following is a 261-amino-acid chain: ClpXP adapter protein SpxH (261 aa).

It belongs to the SpxH family. In terms of assembly, interacts with Spx.

It is found in the cytoplasm. Functionally, adapter protein required for efficient degradation of Spx by ClpXP under non-stress conditions. Interaction with Spx stabilizes Spx and exposes the C-terminus of Spx for recognition and proteolysis by ClpXP. The chain is ClpXP adapter protein SpxH from Staphylococcus aureus.